Here is a 404-residue protein sequence, read N- to C-terminus: Caspase-1 (404 aa).

One can recognise a CARD domain in the interval 1-91 (MADKVLKEKR…HLAGVLELST (91 aa)). Positions 1–119 (MADKVLKEKR…PFPAPQTVQD (119 aa)) are excised as a propeptide. The segment at 111–132 (FPAPQTVQDNPVKPASSEPRGS) is disordered. Residues histidine 237 and cysteine 285 contribute to the active site. Positions 298–316 (SVGPSGNSSLLAAEDFEYD) are excised as a propeptide. Serine 302 is modified (phosphoserine).

This sequence belongs to the peptidase C14A family. Heterotetramer that consists of two anti-parallel arranged heterodimers, each one formed by a 20 kDa (Caspase-1 subunit p20) and a 10 kDa (Caspase-1 subunit p10) subunit. May be a component of the inflammasome, a protein complex which also includes PYCARD, CARD8 and NLRP2 and whose function would be the activation of pro-inflammatory caspases. Component of the AIM2 PANoptosome complex, a multiprotein complex that drives inflammatory cell death (PANoptosis). Both the p10 and p20 subunits interact with MEFV. Interacts with CARD17P/INCA and CARD18. Interacts with SERPINB1; this interaction regulates CASP1 activity. In terms of assembly, heterotetramer that consists of two anti-parallel arranged heterodimers, each one formed by a 20 kDa (Caspase-1 subunit p20) and a 10 kDa (Caspase-1 subunit p10) subunit. Post-translationally, the two subunits are derived from the precursor sequence by an autocatalytic mechanism. Ubiquitinated via 'Lys-11'-linked polyubiquitination. Deubiquitinated by USP8.

It is found in the cytoplasm. Its subcellular location is the cell membrane. It carries out the reaction Strict requirement for an Asp residue at position P1 and has a preferred cleavage sequence of Tyr-Val-Ala-Asp-|-.. In terms of biological role, thiol protease involved in a variety of inflammatory processes by proteolytically cleaving other proteins, such as the precursors of the inflammatory cytokines interleukin-1 beta (IL1B) and interleukin 18 (IL18) as well as the pyroptosis inducer Gasdermin-D (GSDMD), into active mature peptides. Plays a key role in cell immunity as an inflammatory response initiator: once activated through formation of an inflammasome complex, it initiates a pro-inflammatory response through the cleavage of the two inflammatory cytokines IL1B and IL18, releasing the mature cytokines which are involved in a variety of inflammatory processes. Cleaves a tetrapeptide after an Asp residue at position P1. Also initiates pyroptosis, a programmed lytic cell death pathway, through cleavage of GSDMD. In contrast to cleavage of interleukin IL1B, recognition and cleavage of GSDMD is not strictly dependent on the consensus cleavage site but depends on an exosite interface on CASP1 that recognizes and binds the Gasdermin-D, C-terminal (GSDMD-CT) part. Cleaves and activates CASP7 in response to bacterial infection, promoting plasma membrane repair. Upon inflammasome activation, during DNA virus infection but not RNA virus challenge, controls antiviral immunity through the cleavage of CGAS, rendering it inactive. In apoptotic cells, cleaves SPHK2 which is released from cells and remains enzymatically active extracellularly. The sequence is that of Caspase-1 (CASP1) from Sus scrofa (Pig).